We begin with the raw amino-acid sequence, 81 residues long: UPF0180 protein YkuS (81 aa).

It belongs to the UPF0180 family.

This is UPF0180 protein YkuS (ykuS) from Bacillus subtilis (strain 168).